Consider the following 1262-residue polypeptide: Cytoplasmic FMR1-interacting protein homolog (1262 aa).

The segment at 519–550 is disordered; sequence LNRMTDVKGKKKSSAPKGDSANSSSSDIRIPR.

This sequence belongs to the CYFIP family. As to quaternary structure, interacts with gex-3.

Its subcellular location is the cytoplasm. Required for initial steps of body morphogenesis. May play a role in egg laying and yolk protein clatherin-mediated endocytosis by oocytes during oogenesis. Plays a role in the formation of muscle connections, also called muscle arm extensions, between the body wall and the motor axons in the dorsal and ventral cord. The chain is Cytoplasmic FMR1-interacting protein homolog from Caenorhabditis elegans.